Reading from the N-terminus, the 1372-residue chain is MTESEQIVYISCIEEVRYSFVSHLSKALQRKGVNDVFIDSDDSLSNESQSMVERARVSVMILPGNRTVSLDKLVKVLDCQKNKDQVVVPVLYGVRSSETEWLSALDSKGFSSVHHSRKECSDSQLVKETVRDVYEKLFYMERIGIYSKLLEIEKMINKQPLDIRCVGIWGMPGIGKTTLAKAVFDQMSGEFDAHCFIEDYTKAIQEKGVYCLLEEQFLKENAGASGTVTKLSLLRDRLNNKRVLVVLDDVRSPLVVESFLGGFDWFGPKSLIIITSKDKSVFRLCRVNQIYEVQGLNEKEALQLFSLCASIDDMAEQNLHEVSMKVIKYANGHPLALNLYGRELMGKKRPPEMEIAFLKLKECPPAIFVDAIKSSYDTLNDREKNIFLDIACFFQGENVDYVMQLLEGCGFFPHVGIDVLVEKSLVTISENRVRMHNLIQDVGRQIINRETRQTKRRSRLWEPCSIKYLLEDKEQNENEEQKTTFERAQVPEEIEGMFLDTSNLSFDIKHVAFDNMLNLRLFKIYSSNPEVHHVNNFLKGSLSSLPNVLRLLHWENYPLQFLPQNFDPIHLVEINMPYSQLKKLWGGTKDLEMLKTIRLCHSQQLVDIDDLLKAQNLEVVDLQGCTRLQSFPATGQLLHLRVVNLSGCTEIKSFPEIPPNIETLNLQGTGIIELPLSIVKPNYRELLNLLAEIPGLSGVSNLEQSDLKPLTSLMKISTSYQNPGKLSCLELNDCSRLRSLPNMVNLELLKALDLSGCSELETIQGFPRNLKELYLVGTAVRQVPQLPQSLEFFNAHGCVSLKSIRLDFKKLPVHYTFSNCFDLSPQVVNDFLVQAMANVIAKHIPRERHVTGFSQKTVQRSSRDSQQELNKTLAFSFCAPSHANQNSKLDLQPGSSSMTRLDPSWRNTLVGFAMLVQVAFSEGYCDDTDFGISCVCKWKNKEGHSHRREINLHCWALGKAVERDHTFVFFDVNMRPDTDEGNDPDIWADLVVFEFFPVNKQRKPLNDSCTVTRCGVRLITAVNCNTSIENISPVLSLDPMEVSGNEDEEVLRVRYAGLQEIYKALFLYIAGLFNDEDVGLVAPLIANIIDMDVSYGLKVLAYRSLIRVSSNGEIVMHYLLRQMGKEILHTESKKTDKLVDNIQSSMIATKEIEITRSKSRRKNNKEKRVVCVVDRGSRSSDLWVWRKYGQKPIKSSPYPRSYYRCASSKGCFARKQVERSRTDPNVSVITYISEHNHPFPTLRNTLAGSTRSSSSKCSDVTTSASSTVSQDKEGPDKSHLPSSPASPPYAAMVVKEEDMEQWDNMEFDVDVEEDTFIPELFPEDTFADMDKLEENSQTMFLSRRSSGGNMEAQGKNSSDDREVNLPSKILNR.

Positions Thr2 to Leu137 constitute a TIR domain. Residues Val166–Ile417 enclose the NB-ARC domain. Gly170–Thr177 lines the ATP pocket. Residues Pro491–Asn515 form an LRR 1 repeat. Residues Asn528–Ser544 form an LRR 2; degenerate repeat. LRR repeat units follow at residues Leu545–Pro568, His570–Leu591, Ala614–Leu637, Leu638–Pro658, Pro659–Pro681, Ile693–Thr718, Pro723–Glu747, Leu749–Pro767, Arg768–Phe792, and Cys798–Leu823. Positions Ile950–Asp964 match the Nuclear localization signal motif. A DNA-binding region (WRKY) is located at residues Asp1174 to Pro1240. Disordered stretches follow at residues Leu1246–Pro1288 and Gln1337–Arg1372. Positions Ser1249–Ser1269 are enriched in low complexity. Basic and acidic residues predominate over residues Gln1270–His1279. Positions Gln1337–Gly1348 are enriched in polar residues.

It belongs to the disease resistance TIR-NB-LRR family. In terms of assembly, interacts with RPS4B. RPS4B-RRS1B heterodimer interacts with the bacterial effectors AvrRps4 and PopP2.

The protein resides in the nucleus. Transcription factor. Interacts specifically with the W box (5'-(T)TGAC[CT]-3'), a frequently occurring elicitor-responsive cis-acting element. Also acts as a disease resistance protein that specifically recognizes the AvrRps4 type III effector avirulence protein from P.syringae. Heterodimerization with RPS4B is required to form a functional complex to recognize AvrRps4 and to mediate the hypersensitive response. In Arabidopsis thaliana (Mouse-ear cress), this protein is Disease resistance protein RRS1B.